The following is a 409-amino-acid chain: Dihydroorotase (409 aa).

Residues H57 and H59 each coordinate Zn(2+). Substrate is bound by residues 59 to 61 and N91; that span reads HLR. Zn(2+) is bound by residues K139, H168, H208, and D276. Position 139 is an N6-carboxylysine (K139). D276 is a catalytic residue. Substrate-binding positions include H280 and 290-291; that span reads AG.

This sequence belongs to the metallo-dependent hydrolases superfamily. DHOase family. Class I DHOase subfamily. Zn(2+) is required as a cofactor.

The enzyme catalyses (S)-dihydroorotate + H2O = N-carbamoyl-L-aspartate + H(+). It functions in the pathway pyrimidine metabolism; UMP biosynthesis via de novo pathway; (S)-dihydroorotate from bicarbonate: step 3/3. Functionally, catalyzes the reversible cyclization of carbamoyl aspartate to dihydroorotate. The chain is Dihydroorotase from Thermococcus kodakarensis (strain ATCC BAA-918 / JCM 12380 / KOD1) (Pyrococcus kodakaraensis (strain KOD1)).